Reading from the N-terminus, the 206-residue chain is Transcription antitermination protein NusB (206 aa).

Residues 135 to 206 form a disordered region; it reads ARGEKTSAQE…ETQPPGVNEV (72 aa). Residues 169-180 are compositionally biased toward low complexity; the sequence is ATPATTPVTTTV.

Belongs to the NusB family.

In terms of biological role, involved in transcription antitermination. Required for transcription of ribosomal RNA (rRNA) genes. Binds specifically to the boxA antiterminator sequence of the ribosomal RNA (rrn) operons. The sequence is that of Transcription antitermination protein NusB from Heliobacterium modesticaldum (strain ATCC 51547 / Ice1).